The chain runs to 412 residues: O-acetyl-L-homoserine sulfhydrylase 2 (412 aa).

N6-(pyridoxal phosphate)lysine is present on K202.

The protein belongs to the trans-sulfuration enzymes family. Homotetramer. Requires pyridoxal 5'-phosphate as cofactor.

It carries out the reaction O-acetyl-L-homoserine + hydrogen sulfide = L-homocysteine + acetate. With respect to regulation, inhibited by the carbonyl reagents hydroxylamine and phenylhydrazine. Also inhibited by methionine and propargylglycine. In terms of biological role, catalyzes the conversion of O-acetyl-L-homoserine (OAH) into homocysteine in the methionine biosynthesis pathway. Has weak activity with O-acetyl-L-serine, O-phospho-L-serine, L-serine, O-succinyl-L-homoserine and L-homoserine. Shows a very low CTT gamma-synthase activity. In Thermus thermophilus (strain ATCC 27634 / DSM 579 / HB8), this protein is O-acetyl-L-homoserine sulfhydrylase 2.